We begin with the raw amino-acid sequence, 128 residues long: Large-conductance mechanosensitive channel (128 aa).

2 consecutive transmembrane segments (helical) span residues 11 to 31 and 70 to 90; these read FALKGNVLDLAVAVVIGAAFG and GAFIQSIVDFVIIAFAIFIFV.

Belongs to the MscL family. In terms of assembly, homopentamer.

Its subcellular location is the cell membrane. In terms of biological role, channel that opens in response to stretch forces in the membrane lipid bilayer. May participate in the regulation of osmotic pressure changes within the cell. This Listeria innocua serovar 6a (strain ATCC BAA-680 / CLIP 11262) protein is Large-conductance mechanosensitive channel.